We begin with the raw amino-acid sequence, 371 residues long: Forkhead box protein J1.2 (371 aa).

Disordered stretches follow at residues 45–74 (ANSRPPLPRASQGPCSPPAGDTASCQAPRT) and 80–99 (VAVPTAWASLPTPSPSPVQE). The fork-head DNA-binding region spans 109–203 (KPPYSYATLI…VNGVLKRRRM (95 aa)). Residues 228-248 (PSSHHMQHISGGHRQSRRYEK) form a disordered region.

It belongs to the FOXJ1 family. As to expression, expressed diffusely through much of gastrula and neurula stage embryos. At stage 23 (late neurula), limited to the otic vesicle. By stage 28 (tailbud), also expressed transiently in the presumptive nephrostomes of the pronephros. At stage 35 (early tadpole), expressed broadly in the head and strongly expressed in the developing gill structures.

It is found in the nucleus. Functionally, key transcription factor required for motile ciliogenesis. Activates genes essential for motile cilia formation and function. The sequence is that of Forkhead box protein J1.2 from Xenopus tropicalis (Western clawed frog).